The sequence spans 457 residues: Zinc finger protein ZIPIC (457 aa).

One can recognise a ZAD domain in the interval 3–84; that stretch reads CCICQFSVRV…ILELIHSPYM (82 aa). 6 consecutive C2H2-type zinc fingers follow at residues 257-280, 284-306, 312-334, 340-362, 369-391, and 397-419; these read IQCP…KREH, YVCD…LQNH, FACP…MAWH, YQCD…KMIH, LECQ…MRSH, and FACP…LREH. Residues 430–448 form a C2H2-type 7; degenerate zinc finger; that stretch reads FHCSKCTHTFINEQNYDAH.

As to quaternary structure, interacts (via region between the ZAD domain and the first zinc finger domain) with Cp190 (via centrosomal targeting M domain); the interaction is direct. Interacts with pita.

Its subcellular location is the nucleus. It localises to the chromosome. Its function is as follows. Insulator DNA-binding protein. Recruits Cp190 and cooperatively binds to chromatin promoter regions to exert transcriptional regulator and chromatin insulator functions. Chromatin insulators are regulatory elements that establish independent domains of transcriptional activity within eukaryotic genomes. Insulators are proposed to structure the chromatin fiber into independent domains of differing transcriptional potential by promoting the formation of distinct chromatin loops to form topologically associating domains (TADs). Chromatin binding sites often cluster with those of other insulator DNA-binding proteins such as pita, CTCF and BEAF-32, but not Su(Hw). The polypeptide is Zinc finger protein ZIPIC (Drosophila melanogaster (Fruit fly)).